Consider the following 397-residue polypeptide: Elongation factor Tu (397 aa).

The 197-residue stretch at 10 to 206 folds into the tr-type G domain; the sequence is KPHVNIGTIG…AVDENVPDPE (197 aa). Positions 19 to 26 are G1; sequence GHVDHGKT. 19 to 26 is a GTP binding site; it reads GHVDHGKT. Thr26 lines the Mg(2+) pocket. Residues 62–66 form a G2 region; sequence GITIQ. Positions 83–86 are G3; it reads DAPG. Residues 83 to 87 and 138 to 141 each bind GTP; these read DAPGH and NKAD. The segment at 138 to 141 is G4; the sequence is NKAD. The G5 stretch occupies residues 176 to 178; it reads SAL.

The protein belongs to the TRAFAC class translation factor GTPase superfamily. Classic translation factor GTPase family. EF-Tu/EF-1A subfamily. In terms of assembly, monomer.

Its subcellular location is the cytoplasm. The catalysed reaction is GTP + H2O = GDP + phosphate + H(+). In terms of biological role, GTP hydrolase that promotes the GTP-dependent binding of aminoacyl-tRNA to the A-site of ribosomes during protein biosynthesis. This is Elongation factor Tu from Saccharopolyspora erythraea (strain ATCC 11635 / DSM 40517 / JCM 4748 / NBRC 13426 / NCIMB 8594 / NRRL 2338).